A 562-amino-acid chain; its full sequence is Dihydroxy-acid dehydratase (562 aa).

Cys55 serves as a coordination point for [2Fe-2S] cluster. Asp87 contacts Mg(2+). Cys128 contributes to the [2Fe-2S] cluster binding site. Positions 129 and 130 each coordinate Mg(2+). Lys130 is subject to N6-carboxylysine. Residue Cys200 participates in [2Fe-2S] cluster binding. Glu451 contacts Mg(2+). Catalysis depends on Ser477, which acts as the Proton acceptor.

This sequence belongs to the IlvD/Edd family. As to quaternary structure, homodimer. It depends on [2Fe-2S] cluster as a cofactor. Requires Mg(2+) as cofactor.

The enzyme catalyses (2R)-2,3-dihydroxy-3-methylbutanoate = 3-methyl-2-oxobutanoate + H2O. It carries out the reaction (2R,3R)-2,3-dihydroxy-3-methylpentanoate = (S)-3-methyl-2-oxopentanoate + H2O. It participates in amino-acid biosynthesis; L-isoleucine biosynthesis; L-isoleucine from 2-oxobutanoate: step 3/4. It functions in the pathway amino-acid biosynthesis; L-valine biosynthesis; L-valine from pyruvate: step 3/4. Functions in the biosynthesis of branched-chain amino acids. Catalyzes the dehydration of (2R,3R)-2,3-dihydroxy-3-methylpentanoate (2,3-dihydroxy-3-methylvalerate) into 2-oxo-3-methylpentanoate (2-oxo-3-methylvalerate) and of (2R)-2,3-dihydroxy-3-methylbutanoate (2,3-dihydroxyisovalerate) into 2-oxo-3-methylbutanoate (2-oxoisovalerate), the penultimate precursor to L-isoleucine and L-valine, respectively. In Cytophaga hutchinsonii (strain ATCC 33406 / DSM 1761 / CIP 103989 / NBRC 15051 / NCIMB 9469 / D465), this protein is Dihydroxy-acid dehydratase.